A 508-amino-acid chain; its full sequence is Nucleolar complex protein 4 homolog (508 aa).

Transmembrane regions (helical) follow at residues 288–308 (VAYG…FILI), 341–361 (HLAD…AAFI), and 367–387 (LALT…CNLF).

It belongs to the CBF/MAK21 family.

It localises to the nucleus membrane. It is found in the nucleus. Its subcellular location is the nucleolus. This is Nucleolar complex protein 4 homolog (NOC4L) from Gallus gallus (Chicken).